Consider the following 141-residue polypeptide: HTH-type transcriptional repressor NsrR (141 aa).

The region spanning 2-129 is the HTH rrf2-type domain; sequence QLTSFTDYGL…DNYTLADLVE (128 aa). A DNA-binding region (H-T-H motif) is located at residues 28-51; it reads ISEVTDVYGVSRNHMVKIINQLSR. The [2Fe-2S] cluster site is built by cysteine 91, cysteine 96, and cysteine 102.

Requires [2Fe-2S] cluster as cofactor.

Its function is as follows. Nitric oxide-sensitive repressor of genes involved in protecting the cell against nitrosative stress. May require iron for activity. This Escherichia coli O127:H6 (strain E2348/69 / EPEC) protein is HTH-type transcriptional repressor NsrR.